The sequence spans 219 residues: Guanylate kinase (219 aa).

A Guanylate kinase-like domain is found at 15-194; that stretch reads GLMFVLSSPS…AFAEVHSILK (180 aa). 22-29 contacts ATP; it reads SPSGAGKT.

The protein belongs to the guanylate kinase family.

It is found in the cytoplasm. It catalyses the reaction GMP + ATP = GDP + ADP. Functionally, essential for recycling GMP and indirectly, cGMP. The chain is Guanylate kinase from Rhodopseudomonas palustris (strain BisB18).